The primary structure comprises 542 residues: CTP synthase (542 aa).

The tract at residues 1–265 (MARYVFITGG…DSEVLAAFGI (265 aa)) is amidoligase domain. Ser13 lines the CTP pocket. Ser13 provides a ligand contact to UTP. 14–19 (SLGKGI) provides a ligand contact to ATP. Tyr54 provides a ligand contact to L-glutamine. Residue Asp71 coordinates ATP. Asp71 and Glu139 together coordinate Mg(2+). Residues 146–148 (DIE), 186–191 (KTKPTQ), and Lys222 contribute to the CTP site. UTP-binding positions include 186 to 191 (KTKPTQ) and Lys222. The region spanning 291-541 (TIAIVGKYTG…IAAAVEQSRL (251 aa)) is the Glutamine amidotransferase type-1 domain. Gly353 serves as a coordination point for L-glutamine. Residue Cys380 is the Nucleophile; for glutamine hydrolysis of the active site. Residues 381-384 (FGMQ), Glu404, and Arg469 contribute to the L-glutamine site. Active-site residues include His514 and Glu516.

Belongs to the CTP synthase family. As to quaternary structure, homotetramer.

The catalysed reaction is UTP + L-glutamine + ATP + H2O = CTP + L-glutamate + ADP + phosphate + 2 H(+). The enzyme catalyses L-glutamine + H2O = L-glutamate + NH4(+). It carries out the reaction UTP + NH4(+) + ATP = CTP + ADP + phosphate + 2 H(+). It functions in the pathway pyrimidine metabolism; CTP biosynthesis via de novo pathway; CTP from UDP: step 2/2. Its activity is regulated as follows. Allosterically activated by GTP, when glutamine is the substrate; GTP has no effect on the reaction when ammonia is the substrate. The allosteric effector GTP functions by stabilizing the protein conformation that binds the tetrahedral intermediate(s) formed during glutamine hydrolysis. Inhibited by the product CTP, via allosteric rather than competitive inhibition. Catalyzes the ATP-dependent amination of UTP to CTP with either L-glutamine or ammonia as the source of nitrogen. Regulates intracellular CTP levels through interactions with the four ribonucleotide triphosphates. The chain is CTP synthase from Chelativorans sp. (strain BNC1).